We begin with the raw amino-acid sequence, 72 residues long: Translation initiation factor IF-1 (72 aa).

Residues 2 to 72 (AKDDVIEVEG…TRGRITYRYK (71 aa)) enclose the S1-like domain. Residue Y60 is modified to Phosphotyrosine.

The protein belongs to the IF-1 family. As to quaternary structure, component of the 30S ribosomal translation pre-initiation complex which assembles on the 30S ribosome in the order IF-2 and IF-3, IF-1 and N-formylmethionyl-tRNA(fMet); mRNA recruitment can occur at any time during PIC assembly.

The protein resides in the cytoplasm. One of the essential components for the initiation of protein synthesis. Stabilizes the binding of IF-2 and IF-3 on the 30S subunit to which N-formylmethionyl-tRNA(fMet) subsequently binds. Helps modulate mRNA selection, yielding the 30S pre-initiation complex (PIC). Upon addition of the 50S ribosomal subunit IF-1, IF-2 and IF-3 are released leaving the mature 70S translation initiation complex. The sequence is that of Translation initiation factor IF-1 from Bacillus subtilis (strain 168).